The following is a 567-amino-acid chain: 2-succinyl-5-enolpyruvyl-6-hydroxy-3-cyclohexene-1-carboxylate synthase (567 aa).

It belongs to the TPP enzyme family. MenD subfamily. Homodimer. It depends on Mg(2+) as a cofactor. Mn(2+) is required as a cofactor. The cofactor is thiamine diphosphate.

It carries out the reaction isochorismate + 2-oxoglutarate + H(+) = 5-enolpyruvoyl-6-hydroxy-2-succinyl-cyclohex-3-ene-1-carboxylate + CO2. Its pathway is quinol/quinone metabolism; 1,4-dihydroxy-2-naphthoate biosynthesis; 1,4-dihydroxy-2-naphthoate from chorismate: step 2/7. The protein operates within quinol/quinone metabolism; menaquinone biosynthesis. In terms of biological role, catalyzes the thiamine diphosphate-dependent decarboxylation of 2-oxoglutarate and the subsequent addition of the resulting succinic semialdehyde-thiamine pyrophosphate anion to isochorismate to yield 2-succinyl-5-enolpyruvyl-6-hydroxy-3-cyclohexene-1-carboxylate (SEPHCHC). The sequence is that of 2-succinyl-5-enolpyruvyl-6-hydroxy-3-cyclohexene-1-carboxylate synthase from Yersinia pestis bv. Antiqua (strain Angola).